The chain runs to 318 residues: Beta-galactosidase small subunit (318 aa).

It belongs to the bacterial beta-galactosidase small subunit family. Heterodimer of a large (LacL) and a small subunit (LacM).

The catalysed reaction is Hydrolysis of terminal non-reducing beta-D-galactose residues in beta-D-galactosides.. Component of a beta-galactosidase. This Lactobacillus helveticus (Lactobacillus suntoryeus) protein is Beta-galactosidase small subunit.